Reading from the N-terminus, the 149-residue chain is Calmodulin (149 aa).

Ala2 is subject to N-acetylalanine. 4 consecutive EF-hand domains span residues 8-43 (EQIA…LGQN), 44-79 (PTEA…KMKD), 81-116 (DSEE…LGEK), and 117-149 (LTDE…MMSK). Ca(2+) is bound by residues Asp21, Asp23, Asp25, Thr27, Glu32, Asp57, Asp59, Asn61, Thr63, Glu68, Asp94, Asp96, Asn98, and Glu105. Lys116 carries the post-translational modification N6,N6,N6-trimethyllysine. Residues Asp130, Asp132, Asp134, Gln136, and Glu141 each coordinate Ca(2+).

It belongs to the calmodulin family.

Its function is as follows. Calmodulin mediates the control of a large number of enzymes, ion channels and other proteins by Ca(2+). Among the enzymes to be stimulated by the calmodulin-Ca(2+) complex are a number of protein kinases and phosphatases. The chain is Calmodulin from Lumbricus rubellus (Humus earthworm).